Here is a 34-residue protein sequence, read N- to C-terminus: Delta-conotoxin AtVIA (34 aa).

A propeptide spanning residues 1–4 is cleaved from the precursor; it reads LSKK. Glutamine 5 is subject to Pyrrolidone carboxylic acid. 3 disulfide bridges follow: cysteine 6/cysteine 23, cysteine 13/cysteine 27, and cysteine 22/cysteine 31.

In terms of tissue distribution, expressed by the venom duct.

It is found in the secreted. Its function is as follows. Probable toxin from a worm-hunter cone snail. Shows an excitatory activity on a majority of mouse lumbar dorsal root ganglion (DRG) neurons. Very probably inhibits the inactivation of voltage-gated sodium channels (Nav). This is Delta-conotoxin AtVIA from Conus ateralbus (Cone snail).